Reading from the N-terminus, the 260-residue chain is Thiazole synthase (260 aa).

Lysine 96 (schiff-base intermediate with DXP) is an active-site residue. Residues glycine 157, 184 to 185, and 206 to 207 contribute to the 1-deoxy-D-xylulose 5-phosphate site; these read AG and NT.

The protein belongs to the ThiG family. In terms of assembly, homotetramer. Forms heterodimers with either ThiH or ThiS.

It localises to the cytoplasm. It catalyses the reaction [ThiS sulfur-carrier protein]-C-terminal-Gly-aminoethanethioate + 2-iminoacetate + 1-deoxy-D-xylulose 5-phosphate = [ThiS sulfur-carrier protein]-C-terminal Gly-Gly + 2-[(2R,5Z)-2-carboxy-4-methylthiazol-5(2H)-ylidene]ethyl phosphate + 2 H2O + H(+). It functions in the pathway cofactor biosynthesis; thiamine diphosphate biosynthesis. Functionally, catalyzes the rearrangement of 1-deoxy-D-xylulose 5-phosphate (DXP) to produce the thiazole phosphate moiety of thiamine. Sulfur is provided by the thiocarboxylate moiety of the carrier protein ThiS. In vitro, sulfur can be provided by H(2)S. This is Thiazole synthase from Rhodopseudomonas palustris (strain ATCC BAA-98 / CGA009).